The sequence spans 345 residues: Neuropeptide receptor 15 (345 aa).

Over 1 to 11 (MSVAVGIPYVC) the chain is Extracellular. The helical transmembrane segment at 12–32 (FFIILSVVGIIGNVIVIYAIA) threads the bilayer. At 33–40 (GDRNMRKS) the chain is on the cytoplasmic side. Residues 41-61 (VMNILLLNLAVADLANLIFTI) form a helical membrane-spanning segment. Residues 62–90 (PEWIPPVFFGSTDWLFPSFLCPVCRYLEC) lie on the Extracellular side of the membrane. An intrachain disulfide couples C82 to C171. Residues 91–111 (VFLFASISTQMIVCIERYIAI) form a helical membrane-spanning segment. The Cytoplasmic segment spans residues 112-125 (VLPMQARQLCSRRN). Residues 126-146 (VLITVLVDWIFVACFASPYAV) traverse the membrane as a helical segment. Topologically, residues 147-187 (WHSVKTKDRNTNSLRFKLFQLSATCSNTVGKSTWWQGYKLT) are extracellular. A helical membrane pass occupies residues 188-208 (EFLAFYFVPCFIITVVYTKVA). The Cytoplasmic segment spans residues 209 to 246 (KCLWCKDPTLQCETRSCLDNKSSSRSSDALRTRRNVVK). Residues 247–267 (MLIACVAVYFVCYSPIQVIFL) form a helical membrane-spanning segment. The Extracellular segment spans residues 268–281 (SKAVLNVTIHPPYD). A helical transmembrane segment spans residues 282–304 (FILLMNALAMTCSASNPLLYTLF). The Cytoplasmic portion of the chain corresponds to 305-345 (SQKFRRRLRDVLYCPSDVENETKTYYSINNTSIVGPRASFN).

This sequence belongs to the G-protein coupled receptor 1 family. As to expression, expressed in pharyngeal muscle and AWC, ASG, ASE, ASI, and ASJ sensory neurons. Expressed in ASI neuron. Expressed in AFD neurons and in AVK interneuron.

The protein localises to the cell membrane. Probable receptor for neuropeptide ligand nlp-8 that plays a role in octopamine signaling and specifically, the octopamine inhibition of aversion responses in olfactory sensory neurons. Plays a crucial role in daf-7 expression. Acts in concert with gpa-4 to activate TGF-beta-like daf-7 secretion in the ASI neuron, thereby promoting larval development and inhibition of dauer diapause. Suppresses immune response against pathogenic infection by inhibiting transcription regulators elt-2 and hlh-30 in ASJ neuron. Promotes pathogen avoidance behavior via intestinal gon-2, independent of aerotaxis. In Caenorhabditis elegans, this protein is Neuropeptide receptor 15 (npr-15).